The primary structure comprises 309 residues: Oxygen-dependent coproporphyrinogen-III oxidase (309 aa).

Ser100 is a substrate binding site. His104 and His114 together coordinate a divalent metal cation. The Proton donor role is filled by His114. Substrate is bound at residue Asn116–Arg118. Residues His153 and His183 each coordinate a divalent metal cation. The important for dimerization stretch occupies residues Tyr248–Glu283. A substrate-binding site is contributed by Gly266 to Arg268.

It belongs to the aerobic coproporphyrinogen-III oxidase family. In terms of assembly, homodimer. A divalent metal cation is required as a cofactor.

The protein localises to the cytoplasm. The catalysed reaction is coproporphyrinogen III + O2 + 2 H(+) = protoporphyrinogen IX + 2 CO2 + 2 H2O. Its pathway is porphyrin-containing compound metabolism; protoporphyrin-IX biosynthesis; protoporphyrinogen-IX from coproporphyrinogen-III (O2 route): step 1/1. In terms of biological role, involved in the heme biosynthesis. Catalyzes the aerobic oxidative decarboxylation of propionate groups of rings A and B of coproporphyrinogen-III to yield the vinyl groups in protoporphyrinogen-IX. This is Oxygen-dependent coproporphyrinogen-III oxidase from Legionella pneumophila (strain Lens).